The sequence spans 345 residues: MKALVKTRPEPGLELVEVPDPVAGPNDVIVKVMRTGICGTDVHIDKWDGWAAKTVHTPLVLGHEFCGEIVELGSEVNDLEVGQFVSGEGHYVCGRCRACLAGKRHLCRNTQGIGYAVNGAYCQYFVMPAGNVWVHHIPDLDPDVAAIFDPFGNAVHTALQFPCLAEDVLVSGAGPIGIMAALVAQFQGARNVVVTDLSDERLELAQQLGLKNAVNVSREGLETVWDRFDMKEGFDIGLEMSGSGTALTSMIDNMTHGGRIALLGTPSTDITLDFSKIIFNMITIQGVTGRQIFETWYTMASLIRSGLDISGIITDRYPITEFREAFDVAGSGHGGKVVMNWECLD.

A Zn(2+)-binding site is contributed by Cys38. Catalysis depends on charge relay system residues Thr40 and His43. Zn(2+) is bound by residues His63, Glu64, Cys93, Cys96, Cys99, and Cys107. NAD(+) contacts are provided by residues Ile176, Asp196, Arg201, 263-265 (LGT), and 287-288 (VT).

Belongs to the zinc-containing alcohol dehydrogenase family. As to quaternary structure, homotetramer. It depends on Zn(2+) as a cofactor.

Its subcellular location is the cytoplasm. The catalysed reaction is L-threonine + NAD(+) = (2S)-2-amino-3-oxobutanoate + NADH + H(+). The protein operates within amino-acid degradation; L-threonine degradation via oxydo-reductase pathway; glycine from L-threonine: step 1/2. Its function is as follows. Catalyzes the NAD(+)-dependent oxidation of L-threonine to 2-amino-3-ketobutyrate. The protein is L-threonine 3-dehydrogenase of Cutibacterium acnes (strain DSM 16379 / KPA171202) (Propionibacterium acnes).